Consider the following 196-residue polypeptide: Imidazole glycerol phosphate synthase subunit HisH (196 aa).

The 195-residue stretch at 2–196 folds into the Glutamine amidotransferase type-1 domain; the sequence is DVVILDTGCA…AQLMKNFLEM (195 aa). The active-site Nucleophile is the cysteine 77. Residues histidine 178 and glutamate 180 contribute to the active site.

As to quaternary structure, heterodimer of HisH and HisF.

Its subcellular location is the cytoplasm. It catalyses the reaction 5-[(5-phospho-1-deoxy-D-ribulos-1-ylimino)methylamino]-1-(5-phospho-beta-D-ribosyl)imidazole-4-carboxamide + L-glutamine = D-erythro-1-(imidazol-4-yl)glycerol 3-phosphate + 5-amino-1-(5-phospho-beta-D-ribosyl)imidazole-4-carboxamide + L-glutamate + H(+). The catalysed reaction is L-glutamine + H2O = L-glutamate + NH4(+). It participates in amino-acid biosynthesis; L-histidine biosynthesis; L-histidine from 5-phospho-alpha-D-ribose 1-diphosphate: step 5/9. IGPS catalyzes the conversion of PRFAR and glutamine to IGP, AICAR and glutamate. The HisH subunit catalyzes the hydrolysis of glutamine to glutamate and ammonia as part of the synthesis of IGP and AICAR. The resulting ammonia molecule is channeled to the active site of HisF. The polypeptide is Imidazole glycerol phosphate synthase subunit HisH (Yersinia pestis).